The sequence spans 202 residues: ATP synthase subunit b 1 (202 aa).

A helical membrane pass occupies residues 17 to 37 (IAAVLCFSVLVPLVAMAAEGG).

It belongs to the ATPase B chain family. As to quaternary structure, F-type ATPases have 2 components, F(1) - the catalytic core - and F(0) - the membrane proton channel. F(1) has five subunits: alpha(3), beta(3), gamma(1), delta(1), epsilon(1). F(0) has three main subunits: a(1), b(2) and c(10-14). The alpha and beta chains form an alternating ring which encloses part of the gamma chain. F(1) is attached to F(0) by a central stalk formed by the gamma and epsilon chains, while a peripheral stalk is formed by the delta and b chains.

It localises to the cell inner membrane. Functionally, f(1)F(0) ATP synthase produces ATP from ADP in the presence of a proton or sodium gradient. F-type ATPases consist of two structural domains, F(1) containing the extramembraneous catalytic core and F(0) containing the membrane proton channel, linked together by a central stalk and a peripheral stalk. During catalysis, ATP synthesis in the catalytic domain of F(1) is coupled via a rotary mechanism of the central stalk subunits to proton translocation. Component of the F(0) channel, it forms part of the peripheral stalk, linking F(1) to F(0). The sequence is that of ATP synthase subunit b 1 from Syntrophus aciditrophicus (strain SB).